The following is a 183-amino-acid chain: Apo-citrate lyase phosphoribosyl-dephospho-CoA transferase (183 aa).

It belongs to the CitX family.

It carries out the reaction apo-[citrate lyase ACP] + 2'-(5''-triphospho-alpha-D-ribosyl)-3'-dephospho-CoA = holo-[citrate lyase ACP] + diphosphate. Transfers 2-(5''-triphosphoribosyl)-3'-dephosphocoenzyme-A on a serine residue to the apo-acyl carrier protein (gamma chain) of the citrate lyase to yield holo-acyl carrier protein. The protein is Apo-citrate lyase phosphoribosyl-dephospho-CoA transferase of Escherichia coli O139:H28 (strain E24377A / ETEC).